The following is a 495-amino-acid chain: UDP-glycosyltransferase 71B7 (495 aa).

UDP-alpha-D-glucose-binding positions include Ser-284, 351-353, 368-376, and 390-393; these read APQ, HCGWNSTLE, and YAEQ.

Belongs to the UDP-glycosyltransferase family.

The sequence is that of UDP-glycosyltransferase 71B7 (UGT71B7) from Arabidopsis thaliana (Mouse-ear cress).